The primary structure comprises 155 residues: SsrA-binding protein (155 aa).

The protein belongs to the SmpB family.

It is found in the cytoplasm. In terms of biological role, required for rescue of stalled ribosomes mediated by trans-translation. Binds to transfer-messenger RNA (tmRNA), required for stable association of tmRNA with ribosomes. tmRNA and SmpB together mimic tRNA shape, replacing the anticodon stem-loop with SmpB. tmRNA is encoded by the ssrA gene; the 2 termini fold to resemble tRNA(Ala) and it encodes a 'tag peptide', a short internal open reading frame. During trans-translation Ala-aminoacylated tmRNA acts like a tRNA, entering the A-site of stalled ribosomes, displacing the stalled mRNA. The ribosome then switches to translate the ORF on the tmRNA; the nascent peptide is terminated with the 'tag peptide' encoded by the tmRNA and targeted for degradation. The ribosome is freed to recommence translation, which seems to be the essential function of trans-translation. In Helicobacter hepaticus (strain ATCC 51449 / 3B1), this protein is SsrA-binding protein.